The primary structure comprises 104 residues: L-rhamnose mutarotase (104 aa).

Tyr18 lines the substrate pocket. The active-site Proton donor is His22. Substrate is bound by residues Tyr41 and Trp76–Trp77.

This sequence belongs to the rhamnose mutarotase family. In terms of assembly, homodimer.

The protein resides in the cytoplasm. The enzyme catalyses alpha-L-rhamnose = beta-L-rhamnose. Its pathway is carbohydrate metabolism; L-rhamnose metabolism. Functionally, involved in the anomeric conversion of L-rhamnose. This chain is L-rhamnose mutarotase, found in Salmonella agona (strain SL483).